The primary structure comprises 239 residues: tRNA (guanine-N(1)-)-methyltransferase (239 aa).

S-adenosyl-L-methionine contacts are provided by residues G108 and 127 to 132 (LGDYVL).

Belongs to the RNA methyltransferase TrmD family. In terms of assembly, homodimer.

The protein localises to the cytoplasm. It carries out the reaction guanosine(37) in tRNA + S-adenosyl-L-methionine = N(1)-methylguanosine(37) in tRNA + S-adenosyl-L-homocysteine + H(+). Its function is as follows. Specifically methylates guanosine-37 in various tRNAs. This chain is tRNA (guanine-N(1)-)-methyltransferase, found in Streptococcus pneumoniae serotype 2 (strain D39 / NCTC 7466).